A 131-amino-acid chain; its full sequence is Profilin-11 (131 aa).

Cys-13 and Cys-115 are oxidised to a cystine. The short motif at Ala-81–Thr-97 is the Involved in PIP2 interaction element. Position 111 is a phosphothreonine (Thr-111).

This sequence belongs to the profilin family. As to quaternary structure, occurs in many kinds of cells as a complex with monomeric actin in a 1:1 ratio. Post-translationally, phosphorylated by MAP kinases.

Its subcellular location is the cytoplasm. The protein resides in the cytoskeleton. Its function is as follows. Binds to actin and affects the structure of the cytoskeleton. At high concentrations, profilin prevents the polymerization of actin, whereas it enhances it at low concentrations. This is Profilin-11 from Zea mays (Maize).